The sequence spans 263 residues: Endonuclease 8 (263 aa).

The active-site Schiff-base intermediate with DNA is Pro2. Glu3 (proton donor) is an active-site residue. Residue Lys53 is the Proton donor; for beta-elimination activity of the active site. DNA is bound by residues Gln70, Arg125, and Asn169. The FPG-type zinc finger occupies 229–263 (KVFHRDGEACERCGGIIEKTTLSSRPFYWCPHCQK). Arg253 acts as the Proton donor; for delta-elimination activity in catalysis.

It belongs to the FPG family. It depends on Zn(2+) as a cofactor.

The catalysed reaction is 2'-deoxyribonucleotide-(2'-deoxyribose 5'-phosphate)-2'-deoxyribonucleotide-DNA = a 3'-end 2'-deoxyribonucleotide-(2,3-dehydro-2,3-deoxyribose 5'-phosphate)-DNA + a 5'-end 5'-phospho-2'-deoxyribonucleoside-DNA + H(+). Its function is as follows. Involved in base excision repair of DNA damaged by oxidation or by mutagenic agents. Acts as a DNA glycosylase that recognizes and removes damaged bases. Has a preference for oxidized pyrimidines, such as thymine glycol, 5,6-dihydrouracil and 5,6-dihydrothymine. Has AP (apurinic/apyrimidinic) lyase activity and introduces nicks in the DNA strand. Cleaves the DNA backbone by beta-delta elimination to generate a single-strand break at the site of the removed base with both 3'- and 5'-phosphates. The chain is Endonuclease 8 from Salmonella paratyphi B (strain ATCC BAA-1250 / SPB7).